A 765-amino-acid polypeptide reads, in one-letter code: Alpha,alpha-trehalose phosphorylase (765 aa).

352-353 (WD) is a substrate binding site. The active-site Proton donor is the Glu-479. Substrate is bound at residue 591–592 (KQ).

The protein belongs to the glycosyl hydrolase 65 family. Homodimer.

The enzyme catalyses alpha,alpha-trehalose + phosphate = beta-D-glucose 1-phosphate + D-glucose. It functions in the pathway glycan degradation; trehalose degradation. Catalyzes the reversible phosphorolytic cleavage of trehalose. Phosphorolysis is specific for trehalose. The protein is Alpha,alpha-trehalose phosphorylase (treP) of Geobacillus stearothermophilus (Bacillus stearothermophilus).